We begin with the raw amino-acid sequence, 107 residues long: Nucleoid-associated protein Xfasm12_1216 (107 aa).

It belongs to the YbaB/EbfC family. In terms of assembly, homodimer.

It is found in the cytoplasm. The protein resides in the nucleoid. Binds to DNA and alters its conformation. May be involved in regulation of gene expression, nucleoid organization and DNA protection. The protein is Nucleoid-associated protein Xfasm12_1216 of Xylella fastidiosa (strain M12).